The sequence spans 386 residues: Methylthioribose-1-phosphate isomerase (386 aa).

Aspartate 258 functions as the Proton donor in the catalytic mechanism.

Belongs to the eIF-2B alpha/beta/delta subunits family. MtnA subfamily.

It localises to the cytoplasm. The protein resides in the nucleus. The enzyme catalyses 5-(methylsulfanyl)-alpha-D-ribose 1-phosphate = 5-(methylsulfanyl)-D-ribulose 1-phosphate. The protein operates within amino-acid biosynthesis; L-methionine biosynthesis via salvage pathway; L-methionine from S-methyl-5-thio-alpha-D-ribose 1-phosphate: step 1/6. Catalyzes the interconversion of methylthioribose-1-phosphate (MTR-1-P) into methylthioribulose-1-phosphate (MTRu-1-P). The polypeptide is Methylthioribose-1-phosphate isomerase (Uncinocarpus reesii (strain UAMH 1704)).